A 122-amino-acid chain; its full sequence is Large ribosomal subunit protein uL14 (122 aa).

Belongs to the universal ribosomal protein uL14 family. In terms of assembly, part of the 50S ribosomal subunit. Forms a cluster with proteins L3 and L19. In the 70S ribosome, L14 and L19 interact and together make contacts with the 16S rRNA in bridges B5 and B8.

In terms of biological role, binds to 23S rRNA. Forms part of two intersubunit bridges in the 70S ribosome. In Syntrophomonas wolfei subsp. wolfei (strain DSM 2245B / Goettingen), this protein is Large ribosomal subunit protein uL14.